The sequence spans 104 residues: Small ribosomal subunit protein bS6 (104 aa).

It belongs to the bacterial ribosomal protein bS6 family.

Its function is as follows. Binds together with bS18 to 16S ribosomal RNA. The protein is Small ribosomal subunit protein bS6 of Elusimicrobium minutum (strain Pei191).